Reading from the N-terminus, the 298-residue chain is ATP synthase gamma chain (298 aa).

The protein belongs to the ATPase gamma chain family. As to quaternary structure, F-type ATPases have 2 components, CF(1) - the catalytic core - and CF(0) - the membrane proton channel. CF(1) has five subunits: alpha(3), beta(3), gamma(1), delta(1), epsilon(1). CF(0) has three main subunits: a, b and c.

Its subcellular location is the cell inner membrane. Functionally, produces ATP from ADP in the presence of a proton gradient across the membrane. The gamma chain is believed to be important in regulating ATPase activity and the flow of protons through the CF(0) complex. The protein is ATP synthase gamma chain of Albidiferax ferrireducens (strain ATCC BAA-621 / DSM 15236 / T118) (Rhodoferax ferrireducens).